Reading from the N-terminus, the 227-residue chain is UPF0758 protein llmg_1515 (227 aa).

Positions 103–225 constitute an MPN domain; sequence QVLSSKEYGM…YYSFRERDSN (123 aa). Zn(2+) contacts are provided by H174, H176, and D187. The short motif at 174–187 is the JAMM motif element; that stretch reads HNHPSGNLQPSQAD.

It belongs to the UPF0758 family.

The chain is UPF0758 protein llmg_1515 from Lactococcus lactis subsp. cremoris (strain MG1363).